The chain runs to 527 residues: Probable malate:quinone oxidoreductase 2 (527 aa).

This sequence belongs to the MQO family. FAD serves as cofactor.

It carries out the reaction (S)-malate + a quinone = a quinol + oxaloacetate. The protein operates within carbohydrate metabolism; tricarboxylic acid cycle; oxaloacetate from (S)-malate (quinone route): step 1/1. This Pseudomonas putida (strain ATCC 47054 / DSM 6125 / CFBP 8728 / NCIMB 11950 / KT2440) protein is Probable malate:quinone oxidoreductase 2.